The following is a 154-amino-acid chain: Pro-corazonin (154 aa).

The first 19 residues, 1 to 19, serve as a signal peptide directing secretion; sequence MLRLLLLPLFLFTLSMCMG. Gln20 carries the pyrrolidone carboxylic acid modification. Position 30 is an asparagine amide (Asn30). The propeptide occupies 70–154; the sequence is LERCLSQLQR…SAEPNVFGKH (85 aa).

Belongs to the corazonin family. In terms of tissue distribution, expression is restricted to 24 neurons in the larval CNS (8 in the brain and 16 in the ventral nerve cord) and 12-16 neurons in the pars lateralis of the adult brain.

It is found in the secreted. Cardioactive peptide. Corazonin is probably involved in the physiological regulation of the heart beat. Clock (Clk) and cycle (cyc) proteins negatively regulate Crz transcription in a cell-specific manner. The protein is Pro-corazonin (Crz) of Drosophila erecta (Fruit fly).